The following is a 470-amino-acid chain: 6-phospho-beta-galactosidase (470 aa).

D-galactose 6-phosphate is bound by residues Gln-19, His-116, Asn-159, Glu-160, and Asn-297. The active-site Proton donor is the Glu-160. Glu-375 (nucleophile) is an active-site residue. D-galactose 6-phosphate contacts are provided by Ser-430, Trp-431, Lys-437, and Tyr-439.

It belongs to the glycosyl hydrolase 1 family.

It catalyses the reaction a 6-phospho-beta-D-galactoside + H2O = D-galactose 6-phosphate + an alcohol. It functions in the pathway carbohydrate metabolism; lactose degradation; D-galactose 6-phosphate and beta-D-glucose from lactose 6-phosphate: step 1/1. The chain is 6-phospho-beta-galactosidase from Staphylococcus aureus (strain COL).